The primary structure comprises 142 residues: Large ribosomal subunit protein uL13 (142 aa).

Belongs to the universal ribosomal protein uL13 family. In terms of assembly, part of the 50S ribosomal subunit.

Its function is as follows. This protein is one of the early assembly proteins of the 50S ribosomal subunit, although it is not seen to bind rRNA by itself. It is important during the early stages of 50S assembly. The chain is Large ribosomal subunit protein uL13 from Citrobacter koseri (strain ATCC BAA-895 / CDC 4225-83 / SGSC4696).